Here is a 209-residue protein sequence, read N- to C-terminus: Holliday junction branch migration complex subunit RuvA (209 aa).

Residues 1–70 (MINYLRGQAI…EEQPLLYGFG (70 aa)) form a domain I region. The segment at 71–149 (TAPERELFRQ…AWRQLREATT (79 aa)) is domain II. Positions 150 to 158 (TITAILPAA) are flexible linker. The segment at 158–209 (AAILEDVQMTLLALGYSQEEIDRAMAVLSQDALFSKNTQPEDWIKGAINWLG) is domain III.

Belongs to the RuvA family. As to quaternary structure, homotetramer. Forms an RuvA(8)-RuvB(12)-Holliday junction (HJ) complex. HJ DNA is sandwiched between 2 RuvA tetramers; dsDNA enters through RuvA and exits via RuvB. An RuvB hexamer assembles on each DNA strand where it exits the tetramer. Each RuvB hexamer is contacted by two RuvA subunits (via domain III) on 2 adjacent RuvB subunits; this complex drives branch migration. In the full resolvosome a probable DNA-RuvA(4)-RuvB(12)-RuvC(2) complex forms which resolves the HJ.

Its subcellular location is the cytoplasm. The RuvA-RuvB-RuvC complex processes Holliday junction (HJ) DNA during genetic recombination and DNA repair, while the RuvA-RuvB complex plays an important role in the rescue of blocked DNA replication forks via replication fork reversal (RFR). RuvA specifically binds to HJ cruciform DNA, conferring on it an open structure. The RuvB hexamer acts as an ATP-dependent pump, pulling dsDNA into and through the RuvAB complex. HJ branch migration allows RuvC to scan DNA until it finds its consensus sequence, where it cleaves and resolves the cruciform DNA. This Microcystis aeruginosa (strain NIES-843 / IAM M-2473) protein is Holliday junction branch migration complex subunit RuvA.